A 130-amino-acid polypeptide reads, in one-letter code: Aspartate 1-decarboxylase (130 aa).

Serine 25 acts as the Schiff-base intermediate with substrate; via pyruvic acid in catalysis. A Pyruvic acid (Ser) modification is found at serine 25. Position 57 (threonine 57) interacts with substrate. The active-site Proton donor is the tyrosine 58. 73-75 serves as a coordination point for substrate; the sequence is GAA.

It belongs to the PanD family. In terms of assembly, heterooctamer of four alpha and four beta subunits. Pyruvate serves as cofactor. Post-translationally, is synthesized initially as an inactive proenzyme, which is activated by self-cleavage at a specific serine bond to produce a beta-subunit with a hydroxyl group at its C-terminus and an alpha-subunit with a pyruvoyl group at its N-terminus.

The protein resides in the cytoplasm. The catalysed reaction is L-aspartate + H(+) = beta-alanine + CO2. Its pathway is cofactor biosynthesis; (R)-pantothenate biosynthesis; beta-alanine from L-aspartate: step 1/1. Its function is as follows. Catalyzes the pyruvoyl-dependent decarboxylation of aspartate to produce beta-alanine. This is Aspartate 1-decarboxylase from Myxococcus xanthus (strain DK1622).